Reading from the N-terminus, the 808-residue chain is Receptor like protein 27 (808 aa).

The first 31 residues, 1–31 (MLFFIKVFMKTILSVLLLFFIFASSFTLVVG), serve as a signal peptide directing secretion. Over 32–740 (LAGCRPDQIQ…DEDEEVLNWK (709 aa)) the chain is Extracellular. 7 N-linked (GlcNAc...) asparagine glycosylation sites follow: N56, N68, N90, N103, N108, N144, and N167. LRR repeat units lie at residues 96–120 (LQHLRYLNLSNNNFTSASLPSGFGN), 122–144 (NRLEVLYLSSNGFLGQVPSSFSN), 145–170 (LSQLNILDLSHNELTGSFPFVQNLTK), 172–192 (SILVLSYNHFSGTIPSSLLTL), 193–218 (PFLSSLDLRENYLTGSIEAPNSSTSS), 220–241 (LEFMYLGNNHFEGQILEPISKL), 242–265 (INLKHLDLSFLKTSYPIDLNLFSS), 266–291 (FKSLVRLVLSGNSLLATSITSDSKIP), 293–314 (NLENLVLLSCGLIEFPTILKNL), 315–338 (TKLEHIDLSNNKIKGKVPEWFWNL), 340–363 (RLRRVNLFNNLFTDLEGSEEVLVN), and 364–387 (SSVRLLDLAYNHFRGPFPKPPLSI). N-linked (GlcNAc...) asparagine glycosylation is present at N213. The N-linked (GlcNAc...) asparagine glycan is linked to N313. A glycan (N-linked (GlcNAc...) asparagine) is linked at N363. The stretch at 388–407 (NLLSAWNNSFTGNIPLETCN) is one LRR 13; degenerate repeat. Residues N394, N407, and N420 are each glycosylated (N-linked (GlcNAc...) asparagine). LRR repeat units follow at residues 408–434 (RSSLAILDLSYNNLTGPIPRCLSDFQE), 436–456 (LIVVNLRKNNLEGSLPDIFSD), 457–481 (GALLRTLDVGYNQLTGKLPRSLLNC), 483–504 (MLRFVSVDHNKIKDTFPFWLKA), 505–529 (LPDLQALTLRSNKFHGPISPPDRGP), 532–556 (FPKLRILEISDNNFTGSLPPNYFVN), 601–625 (LTSYATIDFSGNKLEGQIPESIGLL), 626–649 (KALIALNLSNNAFTGHIPLSLANV), 650–673 (TELESLDLSRNQLSGTIPNGLKTL), and 675–698 (FLAYISVAHNQLIGEIPQGTQITG). N480 carries an N-linked (GlcNAc...) asparagine glycan. Residue N544 is glycosylated (N-linked (GlcNAc...) asparagine). N-linked (GlcNAc...) asparagine glycans are attached at residues N632 and N648. Residues 741–761 (AVVIGYWPGLLLGLIMAHVIA) form a helical membrane-spanning segment. The Cytoplasmic portion of the chain corresponds to 762–808 (SFKPKWLVKIVGPEKRKEDNPVRLFMTLDSRWDSFNNKKNVEQKSDM).

Belongs to the RLP family.

The protein resides in the cell membrane. In Arabidopsis thaliana (Mouse-ear cress), this protein is Receptor like protein 27.